The primary structure comprises 286 residues: 4-hydroxy-tetrahydrodipicolinate synthase (286 aa).

Residue Thr-42 coordinates pyruvate. The active-site Proton donor/acceptor is Tyr-129. Lys-157 acts as the Schiff-base intermediate with substrate in catalysis. A pyruvate-binding site is contributed by Ile-196.

It belongs to the DapA family. As to quaternary structure, homotetramer; dimer of dimers.

The protein localises to the cytoplasm. It carries out the reaction L-aspartate 4-semialdehyde + pyruvate = (2S,4S)-4-hydroxy-2,3,4,5-tetrahydrodipicolinate + H2O + H(+). It functions in the pathway amino-acid biosynthesis; L-lysine biosynthesis via DAP pathway; (S)-tetrahydrodipicolinate from L-aspartate: step 3/4. In terms of biological role, catalyzes the condensation of (S)-aspartate-beta-semialdehyde [(S)-ASA] and pyruvate to 4-hydroxy-tetrahydrodipicolinate (HTPA). The sequence is that of 4-hydroxy-tetrahydrodipicolinate synthase from Chlamydia trachomatis serovar A (strain ATCC VR-571B / DSM 19440 / HAR-13).